The primary structure comprises 197 residues: dITP/XTP pyrophosphatase (197 aa).

8 to 13 (TGNAGK) contacts substrate. 2 residues coordinate Mg(2+): E40 and D69. Residue D69 is the Proton acceptor of the active site. Substrate-binding positions include S70, 154-157 (FGYD), K177, and 182-183 (HR).

This sequence belongs to the HAM1 NTPase family. In terms of assembly, homodimer. Mg(2+) serves as cofactor.

The catalysed reaction is XTP + H2O = XMP + diphosphate + H(+). It catalyses the reaction dITP + H2O = dIMP + diphosphate + H(+). The enzyme catalyses ITP + H2O = IMP + diphosphate + H(+). In terms of biological role, pyrophosphatase that catalyzes the hydrolysis of nucleoside triphosphates to their monophosphate derivatives, with a high preference for the non-canonical purine nucleotides XTP (xanthosine triphosphate), dITP (deoxyinosine triphosphate) and ITP. Seems to function as a house-cleaning enzyme that removes non-canonical purine nucleotides from the nucleotide pool, thus preventing their incorporation into DNA/RNA and avoiding chromosomal lesions. In Salmonella typhi, this protein is dITP/XTP pyrophosphatase (rdgB).